The chain runs to 408 residues: Eukaryotic initiation factor 4A-II (408 aa).

Positions 1–22 (MSGGSADYNSREHGGPEGMDPD) are disordered. Positions 34–62 (DNFDDMNLKESLLRGIYAYGFEKPSAIQQ) match the Q motif motif. The Helicase ATP-binding domain maps to 65-236 (IIPCIKGYDV…KKFMRDPIRI (172 aa)). 77–84 (QAQSGTGK) is a binding site for ATP. Phosphothreonine is present on Thr160. The DEAD box signature appears at 183–186 (LDEA). Residues 247 to 408 (GIKQFYINVE…EMPMNVADLI (162 aa)) form the Helicase C-terminal domain.

Belongs to the DEAD box helicase family. eIF4A subfamily. As to quaternary structure, eIF4F is a multi-subunit complex, the composition of which varies with external and internal environmental conditions. It is composed of at least EIF4A, EIF4E and EIF4G1/EIFFG3. Interacts with EIF4E. May interact with NOM1.

The enzyme catalyses ATP + H2O = ADP + phosphate + H(+). Its function is as follows. ATP-dependent RNA helicase which is a subunit of the eIF4F complex involved in cap recognition and is required for mRNA binding to ribosome. In the current model of translation initiation, eIF4A unwinds RNA secondary structures in the 5'-UTR of mRNAs which is necessary to allow efficient binding of the small ribosomal subunit, and subsequent scanning for the initiator codon. This chain is Eukaryotic initiation factor 4A-II (EIF4A2), found in Macaca fascicularis (Crab-eating macaque).